Here is a 466-residue protein sequence, read N- to C-terminus: 3-isopropylmalate dehydratase large subunit (466 aa).

Cys347, Cys407, and Cys410 together coordinate [4Fe-4S] cluster.

Belongs to the aconitase/IPM isomerase family. LeuC type 1 subfamily. Heterodimer of LeuC and LeuD. Requires [4Fe-4S] cluster as cofactor.

It catalyses the reaction (2R,3S)-3-isopropylmalate = (2S)-2-isopropylmalate. Its pathway is amino-acid biosynthesis; L-leucine biosynthesis; L-leucine from 3-methyl-2-oxobutanoate: step 2/4. In terms of biological role, catalyzes the isomerization between 2-isopropylmalate and 3-isopropylmalate, via the formation of 2-isopropylmaleate. The chain is 3-isopropylmalate dehydratase large subunit from Pseudoalteromonas translucida (strain TAC 125).